We begin with the raw amino-acid sequence, 359 residues long: Alanine racemase, biosynthetic (359 aa).

Lys34 serves as the catalytic Proton acceptor; specific for D-alanine. Lys34 is subject to N6-(pyridoxal phosphate)lysine. Arg129 provides a ligand contact to substrate. The active-site Proton acceptor; specific for L-alanine is the Tyr255. Met303 provides a ligand contact to substrate.

It belongs to the alanine racemase family. Requires pyridoxal 5'-phosphate as cofactor.

It catalyses the reaction L-alanine = D-alanine. The protein operates within amino-acid biosynthesis; D-alanine biosynthesis; D-alanine from L-alanine: step 1/1. It functions in the pathway cell wall biogenesis; peptidoglycan biosynthesis. Catalyzes the interconversion of L-alanine and D-alanine. Provides the D-alanine required for cell wall biosynthesis. The sequence is that of Alanine racemase, biosynthetic (alr) from Salmonella typhi.